A 440-amino-acid polypeptide reads, in one-letter code: Chromosome partition protein MukF (440 aa).

The leucine-zipper stretch occupies residues 208–236; sequence LSETSGTLRELQDTLEAAGDKLQANLLRI.

The protein belongs to the MukF family. As to quaternary structure, interacts, and probably forms a ternary complex, with MukE and MukB via its C-terminal region. The complex formation is stimulated by calcium or magnesium. It is required for an interaction between MukE and MukB.

The protein localises to the cytoplasm. It localises to the nucleoid. In terms of biological role, involved in chromosome condensation, segregation and cell cycle progression. May participate in facilitating chromosome segregation by condensation DNA from both sides of a centrally located replisome during cell division. Not required for mini-F plasmid partitioning. Probably acts via its interaction with MukB and MukE. Overexpression results in anucleate cells. It has a calcium binding activity. This is Chromosome partition protein MukF from Yersinia enterocolitica serotype O:8 / biotype 1B (strain NCTC 13174 / 8081).